A 357-amino-acid polypeptide reads, in one-letter code: DNA integrity scanning protein DisA (357 aa).

Residues valine 8–isoleucine 146 form the DAC domain. ATP contacts are provided by residues glycine 75, leucine 93, and methionine 106–threonine 110.

The protein belongs to the DisA family. Homooctamer. Mg(2+) serves as cofactor.

The catalysed reaction is 2 ATP = 3',3'-c-di-AMP + 2 diphosphate. Its function is as follows. Participates in a DNA-damage check-point that is active prior to asymmetric division when DNA is damaged. DisA forms globular foci that rapidly scan along the chromosomes during sporulation, searching for lesions. When a lesion is present, DisA pauses at the lesion site. This triggers a cellular response that culminates in a temporary block in sporulation initiation. Also has diadenylate cyclase activity, catalyzing the condensation of 2 ATP molecules into cyclic di-AMP (c-di-AMP). c-di-AMP acts as a signaling molecule that couples DNA integrity with progression of sporulation. The rise in c-di-AMP level generated by DisA while scanning the chromosome, operates as a positive signal that advances sporulation; upon encountering a lesion, the DisA focus arrests at the damaged site and halts c-di-AMP synthesis. This is DNA integrity scanning protein DisA from Bacillus cereus (strain ATCC 14579 / DSM 31 / CCUG 7414 / JCM 2152 / NBRC 15305 / NCIMB 9373 / NCTC 2599 / NRRL B-3711).